Consider the following 222-residue polypeptide: Ribonuclease T (222 aa).

Positions 20 to 194 (VVIDVETAGF…YDTERTAELF (175 aa)) constitute an Exonuclease domain. 4 residues coordinate Mg(2+): Asp23, Glu25, His181, and Asp186. The Proton donor/acceptor role is filled by His181.

The protein belongs to the RNase T family. In terms of assembly, homodimer. Requires Mg(2+) as cofactor.

In terms of biological role, trims short 3' overhangs of a variety of RNA species, leaving a one or two nucleotide 3' overhang. Responsible for the end-turnover of tRNA: specifically removes the terminal AMP residue from uncharged tRNA (tRNA-C-C-A). Also appears to be involved in tRNA biosynthesis. In Shewanella sp. (strain MR-4), this protein is Ribonuclease T.